Here is a 94-residue protein sequence, read N- to C-terminus: Putative FXYD domain-containing ion transport regulator 8 (94 aa).

The first 18 residues, 1 to 18 (MEVVLIFVYSLLVPVVLA), serve as a signal peptide directing secretion. The Extracellular segment spans residues 19–34 (SAAKEKEIDPFHYNYQ). A helical transmembrane segment spans residues 35 to 58 (TLRIGGLVFDVVLFLVPSCHLLSH). Topologically, residues 59–94 (RCKCSFNQKPQDPGDKEAQVENFITANAKEPQKAKN) are cytoplasmic. The segment at 66–94 (QKPQDPGDKEAQVENFITANAKEPQKAKN) is disordered.

This sequence belongs to the FXYD family.

The protein resides in the membrane. This Homo sapiens (Human) protein is Putative FXYD domain-containing ion transport regulator 8 (FXYD6P3).